The primary structure comprises 329 residues: Tryptophan--tRNA ligase (329 aa).

ATP-binding positions include 9-11 (QPS) and 17-18 (GN). The short motif at 10 to 18 (PSGIPTIGN) is the 'HIGH' region element. Residue aspartate 133 coordinates L-tryptophan. ATP is bound by residues 145–147 (GDD), valine 184, and 193–197 (KMSKS). The 'KMSKS' region signature appears at 193–197 (KMSKS).

It belongs to the class-I aminoacyl-tRNA synthetase family. Homodimer.

The protein resides in the cytoplasm. The catalysed reaction is tRNA(Trp) + L-tryptophan + ATP = L-tryptophyl-tRNA(Trp) + AMP + diphosphate + H(+). Its function is as follows. Catalyzes the attachment of tryptophan to tRNA(Trp). The sequence is that of Tryptophan--tRNA ligase from Staphylococcus epidermidis (strain ATCC 35984 / DSM 28319 / BCRC 17069 / CCUG 31568 / BM 3577 / RP62A).